The following is a 280-amino-acid chain: Putative aquaporin-10 (280 aa).

At 1–8 (MEAVSSEY) the chain is on the cytoplasmic side. A helical membrane pass occupies residues 9–29 (YFPLYSALGYFALVFGIGEIA). At 30-64 (RIITAKYVSPRGNSQLFLYELIGTIQMCTCVYENG) the chain is on the extracellular side. A helical membrane pass occupies residues 65–85 (IIFKNYGFPAIFICVALLLTA). Residues 86–114 (GNIFNRGAMTNCAPIFEQFVFGNLGSSKF) lie on the Cytoplasmic side of the membrane. Residues 115–135 (LTILSAQLIGATFASKFAYLI) traverse the membrane as a helical segment. Topologically, residues 136 to 164 (WNITAPYSTAHLENASNLECILHYKQTAG) are extracellular. Residues 165–185 (IVIGFEIVGAFVVRIVVAQLL) traverse the membrane as a helical segment. The Cytoplasmic segment spans residues 186 to 193 (ARPALIKL). The chain crosses the membrane as a helical span at residues 194-214 (IPFAISAYLSLALYVVGVPGL). The Extracellular segment spans residues 215–233 (NPIVATARLYGCRGIDNSS). A helical membrane pass occupies residues 234–254 (FFILYWFCPVLGWLTGAYVVG). The Cytoplasmic portion of the chain corresponds to 255–280 (QKSPSKKSAKDVKAEKKAKAAAKKSD). Positions 256–280 (KSPSKKSAKDVKAEKKAKAAAKKSD) are disordered. Over residues 262-280 (SAKDVKAEKKAKAAAKKSD) the composition is skewed to basic and acidic residues.

The protein belongs to the MIP/aquaporin (TC 1.A.8) family.

The protein localises to the membrane. This chain is Putative aquaporin-10 (aqp-10), found in Caenorhabditis elegans.